The chain runs to 911 residues: DNA ligase 4 (911 aa).

Residues Glu-271, Thr-272, Lys-273, Leu-274, Arg-278, Glu-331, Lys-345, Phe-367, Glu-427, Lys-432, Lys-449, and Lys-451 each coordinate ATP. The N6-AMP-lysine intermediate role is filled by Lys-273. Position 331 (Glu-331) interacts with Mg(2+). Mg(2+) is bound at residue Glu-427. Residues 610–620 (LASKHFYVGGD) are required for catalytic activity. 2 BRCT domains span residues 654 to 743 (KISN…PHFM) and 808 to 911 (SPLS…QYLI).

This sequence belongs to the ATP-dependent DNA ligase family. In terms of assembly, interacts with XRCC4; the LIG4-XRCC4 subcomplex has a 1:2 stoichiometry and XRCC4 is required for LIG4 stability. Component of the core long-range non-homologous end joining (NHEJ) complex (also named DNA-PK complex) composed of PRKDC, LIG4, XRCC4, XRCC6/Ku70, XRCC5/Ku86 and NHEJ1/XLF. Additional component of the NHEJ complex includes PAXX. Following autophosphorylation, PRKDC dissociates from DNA, leading to formation of the short-range NHEJ complex, composed of LIG4, XRCC4, XRCC6/Ku70, XRCC5/Ku86 and NHEJ1/XLF. Interacts with DCLRE1C; the interaction is direct. Interacts with APLF. Mg(2+) is required as a cofactor.

It is found in the nucleus. It carries out the reaction ATP + (deoxyribonucleotide)n-3'-hydroxyl + 5'-phospho-(deoxyribonucleotide)m = (deoxyribonucleotide)n+m + AMP + diphosphate.. Its function is as follows. DNA ligase involved in DNA non-homologous end joining (NHEJ); required for double-strand break (DSB) repair and V(D)J recombination. Catalyzes the NHEJ ligation step of the broken DNA during DSB repair by resealing the DNA breaks after the gap filling is completed. Joins single-strand breaks in a double-stranded polydeoxynucleotide in an ATP-dependent reaction. LIG4 is mechanistically flexible: it can ligate nicks as well as compatible DNA overhangs alone, while in the presence of XRCC4, it can ligate ends with 2-nucleotides (nt) microhomology and 1-nt gaps. Forms a subcomplex with XRCC4; the LIG4-XRCC4 subcomplex is responsible for the NHEJ ligation step and XRCC4 enhances the joining activity of LIG4. Binding of the LIG4-XRCC4 complex to DNA ends is dependent on the assembly of the DNA-dependent protein kinase complex DNA-PK to these DNA ends. LIG4 regulates nuclear localization of XRCC4. The polypeptide is DNA ligase 4 (Pongo abelii (Sumatran orangutan)).